The primary structure comprises 270 residues: Transcription factor bHLH113 (270 aa).

The disordered stretch occupies residues 109-153; that stretch reads CTVDKSTKSSTKKRTGTGNGQESDQNRKPGKKGKRNQEKSSVGIA. The region spanning 144-193 is the bHLH domain; that stretch reads NQEKSSVGIAKVRKERLGERIAALQQLVSPYGKTDAASVLHEAMGYIKFL.

In terms of assembly, homodimer.

The protein localises to the nucleus. The polypeptide is Transcription factor bHLH113 (BHLH113) (Arabidopsis thaliana (Mouse-ear cress)).